The following is a 147-amino-acid chain: Phospholipase A2 SSD387 (147 aa).

An N-terminal signal peptide occupies residues 1–19 (MSPKFLLFSIIAVWSCAAA). A propeptide spanning residues 20–28 (IEALFIQPR) is cleaved from the precursor. Disulfide bonds link Cys55–Cys71, Cys70–Cys130, Cys77–Cys123, Cys86–Cys116, and Cys109–Cys121. Residues Gly56 and Gly58 each coordinate Ca(2+). His74 is an active-site residue. Residue Asp75 participates in Ca(2+) binding. Asp124 is an active-site residue.

Ca(2+) is required as a cofactor. As to expression, expressed by the venom gland.

The protein localises to the secreted. The catalysed reaction is a 1,2-diacyl-sn-glycero-3-phosphocholine + H2O = a 1-acyl-sn-glycero-3-phosphocholine + a fatty acid + H(+). Its function is as follows. PLA2 catalyzes the calcium-dependent hydrolysis of the 2-acyl groups in 3-sn-phosphoglycerides. This Scolopendra dehaani (Thai centipede) protein is Phospholipase A2 SSD387.